Reading from the N-terminus, the 83-residue chain is Alpha-conotoxin QcIA (83 aa).

Residues 1-21 (MGMRMMFTLFLLAVLSTTVVS) form the signal peptide. A propeptide spanning residues 22–48 (FTLDRASNGRDAAADSKAADQIAQTVR) is cleaved from the precursor. Intrachain disulfides connect Cys-51–Cys-57 and Cys-52–Cys-65. Residues 53-55 (SNP) form a ser-Xaa-Pro motif, crucial for potent interaction with nAChR region. A propeptide spanning residues 66–83 (RRTLMLQNPLNHDMSPSA) is cleaved from the precursor.

This sequence belongs to the conotoxin A superfamily. In terms of tissue distribution, expressed by the venom duct.

The protein resides in the secreted. Functionally, alpha-conotoxins bind to the nicotinic acetylcholine receptors (nAChR) and inhibit them. A synthetic amidated version of this toxin potently and preferentially antagonizes neuronal rat alpha-3-beta-2 (IC(50)=55.7 nM) and alpha-6/alpha-3-beta-4 (IC(50)=90.69 nM) nAChRs. The sequence is that of Alpha-conotoxin QcIA from Conus quercinus (Oak cone).